We begin with the raw amino-acid sequence, 595 residues long: Solute carrier family 13 member 1 (595 aa).

Transmembrane regions (helical) follow at residues 13–33 (FLLV…IRSK), 40–60 (ILFV…ITAL), 77–97 (VASA…CLAT), 113–133 (VMMV…STAF), and 134–154 (LSMW…VEAV). Asn-174 is a glycosylation site (N-linked (GlcNAc...) asparagine). A disordered region spans residues 190–218 (QETNERKEKTKPALGSSNDKGKVSSKMET). The span at 208-218 (DKGKVSSKMET) shows a compositional bias: basic and acidic residues. 8 helical membrane passes run 239-259 (LMCL…ITGT), 283-303 (SWFL…WIWL), 348-368 (IVTL…DPGF), 381-401 (GYVT…LIPA), 464-484 (PLGS…VTSL), 491-511 (PATI…IHVN), 512-532 (PLHI…LPVA), and 553-573 (AGLG…FTWI). An N-linked (GlcNAc...) asparagine glycan is attached at Asn-591.

It belongs to the SLC13A/DASS transporter (TC 2.A.47) family. NADC subfamily. As to expression, kidney and intestine.

Its subcellular location is the apical cell membrane. The enzyme catalyses sulfate(out) + 3 Na(+)(out) = sulfate(in) + 3 Na(+)(in). The catalysed reaction is selenate(out) + 3 Na(+)(out) = selenate(in) + 3 Na(+)(in). It carries out the reaction thiosulfate(out) + 3 Na(+)(out) = thiosulfate(in) + 3 Na(+)(in). Its function is as follows. Sodium:sulfate symporter that mediates sulfate reabsorption in the kidney and small intestine. Can also mediate the transport of selenate and thiosulfate. The protein is Solute carrier family 13 member 1 (Slc13a1) of Rattus norvegicus (Rat).